Consider the following 280-residue polypeptide: tRNA pseudouridine synthase A (280 aa).

Residue Asp60 is the Nucleophile of the active site. Substrate is bound at residue Tyr119.

This sequence belongs to the tRNA pseudouridine synthase TruA family. As to quaternary structure, homodimer.

It carries out the reaction uridine(38/39/40) in tRNA = pseudouridine(38/39/40) in tRNA. In terms of biological role, formation of pseudouridine at positions 38, 39 and 40 in the anticodon stem and loop of transfer RNAs. The protein is tRNA pseudouridine synthase A of Treponema pallidum (strain Nichols).